The sequence spans 681 residues: MSMSNPLLNIQGLPPFSQIKPEHIRPAVEKLIQDCRNTIEQVLKQPHFTWENFILPLTETNDRLNRAWSPVSHLNSVKNSTELREAYQTCLPLLSEYSTWVGQHKGLYNAYLALKNSAEFADYSIAQKKAIENSLRDFELSGIGLSEEKQQRYGEIVARLSELNSQFSNNVLDATMGWEKLIENEAELAGLPESALQAAQQSAESKGLKGYRFTLEIPSYLPVMTYCENRALREEMYRAYATRASEQGPNAGKWDNSKVMEEILTLRVELAKLLGFNTYTELSLATKMAENPQQVLDFLDHLAERAKPQGEKELQELKGYCEKEFGVTELAPWDIGFYSEKQKQHLYAINDEELRPYFPENRVISGLFELIKRIFNIRAVERKGVDTWHKDVRFFDLIDENDQLRGSFYLDLYAREHKRGGAWMDDCIGRKRKLDGSIETPVAYLTCNFNAPIGNKPALFTHNEVTTLFHEFGHGIHHMLTQIDVSDVAGINGVPWDAVELPSQFMENWCWEEEALAFISGHYETGEPLPKEKLTQLLKAKNFQAAMFILRQLEFGIFDFRLHHTFDAEKTNQILDTLKSVKSQVAVIKGVDWARAPHSFSHIFAGGYAAGYYSYLWAEVLSADAYSRFEEEGIFNPITGKSFLDEILTRGGSEEPMELFKRFRGREPQLDALLRHKGIMN.

Histidine 470 is a Zn(2+) binding site. Glutamate 471 is an active-site residue. Residues histidine 474 and histidine 477 each contribute to the Zn(2+) site.

The protein belongs to the peptidase M3 family. Zn(2+) serves as cofactor.

It carries out the reaction Hydrolysis of oligopeptides, with broad specificity. Gly or Ala commonly occur as P1 or P1' residues, but more distant residues are also important, as is shown by the fact that Z-Gly-Pro-Gly-|-Gly-Pro-Ala is cleaved, but not Z-(Gly)(5).. In terms of biological role, may play a specific role in the degradation of signal peptides after they are released from precursor forms of secreted proteins. Can cleave N-acetyl-L-Ala(4). This chain is Oligopeptidase A (prlC), found in Haemophilus influenzae (strain ATCC 51907 / DSM 11121 / KW20 / Rd).